The chain runs to 565 residues: Nephronectin (565 aa).

A signal peptide spans 1 to 19 (MDFLLALVLVSSLYLQAAA). Residues 52 to 87 (SWGQCQPVCQPRCKHGECIGPNKCKCHPGYAGKTCN) enclose the EGF-like 1 domain. Disulfide bonds link Cys56/Cys69, Cys60/Cys75, Cys77/Cys86, Cys93/Cys104, Cys100/Cys113, and Cys115/Cys127. Positions 89–128 (DLNECGLKPRPCKHRCMNTYGSYKCYCLNGYMLMPDGSCS) constitute an EGF-like 2; calcium-binding domain. The 37-residue stretch at 132 to 168 (TCSMANCQYGCDVVKGQIRCQCPSPGLQLAPDGRTCV) folds into the EGF-like 3 domain. The EGF-like 4; calcium-binding domain occupies 169-213 (DVDECATGRASCPRFRQCVNTFGSYICKCHKGFDLMYIGGKYQCH). 6 disulfide bridges follow: Cys173–Cys186, Cys180–Cys195, Cys197–Cys212, Cys218–Cys231, Cys225–Cys240, and Cys242–Cys253. The 41-residue stretch at 214–254 (DIDECSLGQYQCSSFARCYNIRGSYKCKCKEGYQGDGLTCV) folds into the EGF-like 5; calcium-binding domain. The tract at residues 301–389 (YIPPIITNRP…KPRGDVFIPR (89 aa)) is disordered. The segment covering 304–316 (PIITNRPTSKPTT) has biased composition (low complexity). Pro residues predominate over residues 317 to 347 (RPTPKPTPIPTPPPPPPLPTELRTPLPPTTP). The Integrin interaction signature appears at 382–384 (RGD). An MAM domain is found at 420 to 563 (HSCNFDHGLC…VSLKKGHCSE (144 aa)).

This sequence belongs to the nephronectin family. Homodimer and homotrimer. In terms of tissue distribution, expressed in kidney and lung and to a lower extent in brain, pregnant uterus, placenta, thyroid gland and blood vessels.

It localises to the secreted. The protein resides in the extracellular space. Its subcellular location is the extracellular matrix. Its function is as follows. Functional ligand of integrin alpha-8/beta-1 in kidney development. Regulates the expression of GDNF with integrin alpha-8/beta-1 which is essential for kidney development. May also play a role in the development and function of various tissues, regulating cell adhesion, spreading and survival through the binding of several integrins. This Homo sapiens (Human) protein is Nephronectin (NPNT).